Here is a 401-residue protein sequence, read N- to C-terminus: Argininosuccinate synthase (401 aa).

ATP contacts are provided by residues 7 to 15 and Ala-34; that span reads AYSGGLDTS. Positions 85 and 90 each coordinate L-citrulline. Gly-115 provides a ligand contact to ATP. Residues Thr-117, Asn-121, and Asp-122 each coordinate L-aspartate. An L-citrulline-binding site is contributed by Asn-121. L-citrulline contacts are provided by Arg-125, Ser-174, Ser-183, Glu-259, and Tyr-271.

The protein belongs to the argininosuccinate synthase family. Type 1 subfamily. As to quaternary structure, homotetramer.

The protein resides in the cytoplasm. It carries out the reaction L-citrulline + L-aspartate + ATP = 2-(N(omega)-L-arginino)succinate + AMP + diphosphate + H(+). It participates in amino-acid biosynthesis; L-arginine biosynthesis; L-arginine from L-ornithine and carbamoyl phosphate: step 2/3. The sequence is that of Argininosuccinate synthase from Pelotomaculum thermopropionicum (strain DSM 13744 / JCM 10971 / SI).